Reading from the N-terminus, the 521-residue chain is uncharacterized protein (521 aa).

Positions 14 to 41 form a coiled coil; that stretch reads QFQQMQHQMQQQQQQQMQQQQQQQQQQQ. Composition is skewed to low complexity over residues 238–266, 275–353, and 423–482; these read LSGS…TSSS, SSTS…NNNN, and PRLS…PNNP. Disordered regions lie at residues 238 to 357 and 413 to 491; these read LSGS…ISGF and TAVA…SNNG.

This is an uncharacterized protein from Dictyostelium discoideum (Social amoeba).